Here is a 493-residue protein sequence, read N- to C-terminus: Probable cytosol aminopeptidase (493 aa).

Mn(2+) contacts are provided by lysine 257 and aspartate 262. Residue lysine 269 is part of the active site. Residues aspartate 281, aspartate 341, and glutamate 343 each coordinate Mn(2+). The active site involves arginine 345.

The protein belongs to the peptidase M17 family. Requires Mn(2+) as cofactor.

It is found in the cytoplasm. The enzyme catalyses Release of an N-terminal amino acid, Xaa-|-Yaa-, in which Xaa is preferably Leu, but may be other amino acids including Pro although not Arg or Lys, and Yaa may be Pro. Amino acid amides and methyl esters are also readily hydrolyzed, but rates on arylamides are exceedingly low.. It carries out the reaction Release of an N-terminal amino acid, preferentially leucine, but not glutamic or aspartic acids.. Functionally, presumably involved in the processing and regular turnover of intracellular proteins. Catalyzes the removal of unsubstituted N-terminal amino acids from various peptides. The protein is Probable cytosol aminopeptidase of Prochlorococcus marinus (strain MIT 9211).